The sequence spans 291 residues: MKKIEAWLSKKGLKNKRTLIVVIAFVLFIIFLFLLLNSNSEDSGNITITENAELRTGPNAAYPVIYKVEKGDHFKKIGKVGKWIEVEDTSSNEKGWIAGWHTNLDIVADNTKEKNPLQGKTIVLDPGHGGSDQGASSNTKYKSLEKDYTLKTAKELQRTLEKEGATVKMTRTDDTYVSLENRDIKGDAYLSIHNDALESSNANGMTVYWYHDNQRALADTLDATIQKKGLLSNRGSRQENYQVLRQTKVPAVLLELGYISNPTDETMIKDQLHRQILEQAIVDGLKIYFSA.

An N-terminal signal peptide occupies residues Met1–Ser40. One can recognise an SH3b domain in the interval Glu41–Asp105. A disordered region spans residues Gln118 to Lys140. In terms of domain architecture, MurNAc-LAA spans Ile122–Lys286.

Belongs to the N-acetylmuramoyl-L-alanine amidase 3 family.

It localises to the secreted. In terms of biological role, probably involved in cell-wall metabolism. This chain is Probable cell wall amidase LytH (lytH), found in Staphylococcus aureus (strain USA300).